Reading from the N-terminus, the 142-residue chain is Large ribosomal subunit protein uL13 (142 aa).

It belongs to the universal ribosomal protein uL13 family. In terms of assembly, part of the 50S ribosomal subunit.

Its function is as follows. This protein is one of the early assembly proteins of the 50S ribosomal subunit, although it is not seen to bind rRNA by itself. It is important during the early stages of 50S assembly. The chain is Large ribosomal subunit protein uL13 from Citrifermentans bemidjiense (strain ATCC BAA-1014 / DSM 16622 / JCM 12645 / Bem) (Geobacter bemidjiensis).